The chain runs to 160 residues: Sec-independent protein translocase protein TatB (160 aa).

Residues 1-21 (MFGMGFFEILVVLVVAIIFLG) form a helical membrane-spanning segment. Residues 118 to 160 (HLNEEVSNEEALNKEVSSDESPKEVQLATDNNTKEHDKEKEHV) are disordered. 2 stretches are compositionally biased toward basic and acidic residues: residues 128 to 140 (ALNK…ESPK) and 149 to 160 (NTKEHDKEKEHV).

It belongs to the TatB family. The Tat system comprises two distinct complexes: a TatABC complex, containing multiple copies of TatA, TatB and TatC subunits, and a separate TatA complex, containing only TatA subunits. Substrates initially bind to the TatABC complex, which probably triggers association of the separate TatA complex to form the active translocon.

Its subcellular location is the cell inner membrane. Its function is as follows. Part of the twin-arginine translocation (Tat) system that transports large folded proteins containing a characteristic twin-arginine motif in their signal peptide across membranes. Together with TatC, TatB is part of a receptor directly interacting with Tat signal peptides. TatB may form an oligomeric binding site that transiently accommodates folded Tat precursor proteins before their translocation. In Helicobacter pylori (strain HPAG1), this protein is Sec-independent protein translocase protein TatB.